The sequence spans 188 residues: Acireductone dioxygenase (188 aa).

The Fe(2+) site is built by histidine 97, histidine 99, glutamate 103, and histidine 141. Ni(2+)-binding residues include histidine 97, histidine 99, glutamate 103, and histidine 141.

This sequence belongs to the acireductone dioxygenase (ARD) family. Monomer. It depends on Fe(2+) as a cofactor. Ni(2+) serves as cofactor.

It catalyses the reaction 1,2-dihydroxy-5-(methylsulfanyl)pent-1-en-3-one + O2 = 3-(methylsulfanyl)propanoate + CO + formate + 2 H(+). It carries out the reaction 1,2-dihydroxy-5-(methylsulfanyl)pent-1-en-3-one + O2 = 4-methylsulfanyl-2-oxobutanoate + formate + 2 H(+). The protein operates within amino-acid biosynthesis; L-methionine biosynthesis via salvage pathway; L-methionine from S-methyl-5-thio-alpha-D-ribose 1-phosphate: step 5/6. Catalyzes 2 different reactions between oxygen and the acireductone 1,2-dihydroxy-3-keto-5-methylthiopentene (DHK-MTPene) depending upon the metal bound in the active site. Fe-containing acireductone dioxygenase (Fe-ARD) produces formate and 2-keto-4-methylthiobutyrate (KMTB), the alpha-ketoacid precursor of methionine in the methionine recycle pathway. Ni-containing acireductone dioxygenase (Ni-ARD) produces methylthiopropionate, carbon monoxide and formate, and does not lie on the methionine recycle pathway. The sequence is that of Acireductone dioxygenase from Xylella fastidiosa (strain 9a5c).